The sequence spans 316 residues: tRNA-cytidine(32) 2-sulfurtransferase (316 aa).

The PP-loop motif signature appears at S45 to S50. Residues C120, C123, and C211 each coordinate [4Fe-4S] cluster.

Belongs to the TtcA family. In terms of assembly, homodimer. Mg(2+) serves as cofactor. Requires [4Fe-4S] cluster as cofactor.

It localises to the cytoplasm. The enzyme catalyses cytidine(32) in tRNA + S-sulfanyl-L-cysteinyl-[cysteine desulfurase] + AH2 + ATP = 2-thiocytidine(32) in tRNA + L-cysteinyl-[cysteine desulfurase] + A + AMP + diphosphate + H(+). The protein operates within tRNA modification. Its function is as follows. Catalyzes the ATP-dependent 2-thiolation of cytidine in position 32 of tRNA, to form 2-thiocytidine (s(2)C32). The sulfur atoms are provided by the cysteine/cysteine desulfurase (IscS) system. The polypeptide is tRNA-cytidine(32) 2-sulfurtransferase (Shewanella sediminis (strain HAW-EB3)).